A 32-amino-acid polypeptide reads, in one-letter code: Ranatuerin-3 (32 aa).

An intrachain disulfide couples Cys23 to Cys28.

Belongs to the frog skin active peptide (FSAP) family. Ranatuerin subfamily. In terms of tissue distribution, expressed by the skin glands.

The protein resides in the secreted. Antibacterial activity against Gram-positive bacterium S.aureus (MIC=60 uM). Shows no detectable hemolytic activity towards human erythrocytes. The sequence is that of Ranatuerin-3 from Aquarana catesbeiana (American bullfrog).